The chain runs to 99 residues: Acylphosphatase (99 aa).

Positions 11–97 (ARRIHVKGKV…VVAQGFTQKP (87 aa)) constitute an Acylphosphatase-like domain. Residues R26 and N44 contribute to the active site.

Belongs to the acylphosphatase family.

It catalyses the reaction an acyl phosphate + H2O = a carboxylate + phosphate + H(+). The chain is Acylphosphatase (acyP) from Rhizorhabdus wittichii (strain DSM 6014 / CCUG 31198 / JCM 15750 / NBRC 105917 / EY 4224 / RW1) (Sphingomonas wittichii).